Consider the following 864-residue polypeptide: E3 ubiquitin-protein ligase Itchy (864 aa).

Positions 1 to 115 (MSDSGPQLDS…LKSNNMKLEE (115 aa)) constitute a C2 domain. N-acetylserine is present on Ser-2. Residues 151–164 (NGETSCSESTTQND) show a composition bias toward polar residues. Residues 151 to 294 (NGETSCSEST…SQAPLPPGWE (144 aa)) are disordered. Residues 165 to 174 (DGCRTRDDTR) are compositionally biased toward basic and acidic residues. The span at 195-206 (NGNNSPSLSNGG) shows a compositional bias: low complexity. At Ser-199 the chain carries Phosphoserine; by MAPK8. Pro residues predominate over residues 210 to 224 (SRPPRPSRPPPPTPR). Thr-222 bears the Phosphothreonine; by MAPK8 mark. Residues 230–259 (NGSPSTNSDSDGSSTGSLPPTNTNVNTSTS) are compositionally biased toward low complexity. Phosphoserine; by MAPK8 is present on Ser-232. 2 WW domains span residues 287–320 (APLP…RPEP) and 319–352 (EPLP…RPTL). Phosphothreonine; by SGK3 is present on Thr-346. Residues 356 to 432 (RNYEQWQLQR…RITQWEDPRS (77 aa)) are required for interaction with FYN. Tyr-381 is subject to Phosphotyrosine; by FYN. WW domains lie at 399 to 432 (GPLP…DPRS) and 439 to 472 (KPLP…DPRT). Ser-411 bears the Phosphoserine; by SGK3 mark. Positions 530-864 (SPQDLRRRLW…IEETEGFGQE (335 aa)) constitute an HECT domain. The tract at residues 535–544 (RRRLWVIFPG) is MAP kinase docking site. The active-site Glycyl thioester intermediate is Cys-832.

Monomer. Part of a ternary complex composed of SMAD3, ITCH/AIP4 and NEDD9/HEF1; within the complex NEDD9/HEF1 interacts (via N-terminus) with ITCH/AIP4 (via WW domains); the complex mediates ubiquitination and proteasomal degradation of NEDD9/HEF1. Interacts (via WW domains) with OCNL. Interacts (via WW domains) with NOTCH1. Interacts (via WW domains) JUN. Interacts with JUNB; the interaction promotes ITCH-mediated ubiquitination and degradation of JUNB. Interacts with FYN; the interaction phosphorylates ITCH on Tyr-381 decreasing binding of JUNB. Interacts (via WW domain 2) with N4BP1; the interaction inhibits the E3 ubiquitin-protein ligase activity. Interacts with NDFIP1 and NDFIP2; the interaction with NDFIP proteins activates the E3 ubiquitin-protein ligase and may induce its recruitment to exosomes. Interacts with ARHGEF7. Interacts with RNF11. Interacts (via the WW 1 domain) with NFE2 (via the PXY motif 1); the interaction promotes 'Lys-63'-linked ubiquitination of NFE2, retains it in the cytoplasm and prevents its transactivation activity. Interacts (via WW domains) with CXCR4 (via C-terminus); the interaction depends on CXCR4 phosphorylation. Found in a complex with E3 ligase DTX3L and ESCRT-0 components HGS and STAM. Interacts with DTX3L (via C-terminus); the interaction is increased upon CXCL12 stimulation and inhibits ITCH catalytic activity (the interaction is direct). Interacts with HGS. Interacts (via WW domains) with PCBP2 within a complex containing ITCH, MAVS and PCBP2. Interacts (via WW domains) with TXNIP (via C-terminus). Interacts with p15 BID. Interacts with ERBB4. Interacts with DTX1. Interacts with SPART. Interacts with SNX9 and SNX18. Interacts (via its WW domains) with ATN1. Interacts (via WW domains) with SGK3. Interacts with CBLC. Interacts with OTUD7B. Interacts (via WW domain 1,2 and 3) with PI4K2A; the interaction inhibits PI4K2A catalytic activity and promotes ITCH catalytic activity. Interacts with ARRDC4. Part of a complex containing ITCH, NDFIP1 and MAP3K7. Interacts with UBE2L3; the interaction is mediated by NDFIP1. Interacts with MAPK8/JNK1. Interacts (via WW domains) with ARRDC1 (via PPxY motifs); the interaction is direct and participates in the recruitment of the ubiquitin-protein ligase ITCH to the NOTCH1 receptor. Interacts (via WW domains) with ARRDC2. Interacts (via WW domains) with ARRDC3. Interacts directly with LDLRAD3; this interaction promotes ITCH auto-ubiquitination leading to its degradation. Interacts with ENTREP1; enhances the ubiquitination of CXCR4 by ITCH and its subsequent endocytosis. Interacts with USP12 and WDR48/UAF1; the interaction is more efficient when both USP12 and WDR48/UAF1 are involved and may facilitate the recruitment of the USP12 deubiquitinase complex to Notch. As to quaternary structure, (Microbial infection) Interacts with Epstein-Barr virus LMP2A. In terms of processing, on T-cell activation, phosphorylation by the JNK cascade on serine and threonine residues surrounding the PRR domain accelerates the ubiquitination and degradation of JUN and JUNB. The increased ITCH catalytic activity due to phosphorylation by JNK1 may occur due to a conformational change disrupting the interaction between the PRR/WW motifs domain and the HECT domain and, thus exposing the HECT domain. Phosphorylation by FYN reduces interaction with JUNB and negatively controls JUN ubiquitination and degradation. Interacts directly with LDLRAD3; this interaction promotes ITCH auto-ubiquitination leading to its degradation. Post-translationally, monoubiquitinated. Autopolyubiquitinated with 'Lys-63' linkages which does not lead to protein degradation. Detected in uterus (at protein level). Widely expressed.

It localises to the cell membrane. Its subcellular location is the cytoplasm. The protein resides in the nucleus. It is found in the early endosome membrane. The protein localises to the endosome membrane. It carries out the reaction S-ubiquitinyl-[E2 ubiquitin-conjugating enzyme]-L-cysteine + [acceptor protein]-L-lysine = [E2 ubiquitin-conjugating enzyme]-L-cysteine + N(6)-ubiquitinyl-[acceptor protein]-L-lysine.. The protein operates within protein modification; protein ubiquitination. With respect to regulation, activated by NDFIP1- and NDFIP2-binding. Activated by PI4K2A-binding. Inhibited by DTX3L-binding. Inhibited by N4BP1 binding. In terms of biological role, acts as an E3 ubiquitin-protein ligase which accepts ubiquitin from an E2 ubiquitin-conjugating enzyme in the form of a thioester and then directly transfers the ubiquitin to targeted substrates. It catalyzes 'Lys-29'-, 'Lys-48'- and 'Lys-63'-linked ubiquitin conjugation. Involved in the control of inflammatory signaling pathways. Is an essential component of a ubiquitin-editing protein complex, comprising also TNFAIP3, TAX1BP1 and RNF11, that ensures the transient nature of inflammatory signaling pathways. Promotes the association of the complex after TNF stimulation. Once the complex is formed, TNFAIP3 deubiquitinates 'Lys-63' polyubiquitin chains on RIPK1 and catalyzes the formation of 'Lys-48'-polyubiquitin chains. This leads to RIPK1 proteasomal degradation and consequently termination of the TNF- or LPS-mediated activation of NFKB1. Ubiquitinates RIPK2 by 'Lys-63'-linked conjugation and influences NOD2-dependent signal transduction pathways. Regulates the transcriptional activity of several transcription factors involved in immune response. Ubiquitinates NFE2 by 'Lys-63' linkages and is implicated in the control of the development of hematopoietic lineages. Mediates JUN ubiquitination and degradation. Mediates JUNB ubiquitination and degradation. Critical regulator of type 2 helper T (Th2) cell cytokine production by inducing JUNB ubiquitination and degradation. Involved in the negative regulation of MAVS-dependent cellular antiviral responses. Ubiquitinates MAVS through 'Lys-48'-linked conjugation resulting in MAVS proteasomal degradation. Following ligand stimulation, regulates sorting of Wnt receptor FZD4 to the degradative endocytic pathway probably by modulating PI42KA activity. Ubiquitinates PI4K2A and negatively regulates its catalytic activity. Ubiquitinates chemokine receptor CXCR4 and regulates sorting of CXCR4 to the degradative endocytic pathway following ligand stimulation by ubiquitinating endosomal sorting complex required for transport ESCRT-0 components HGS and STAM. Targets DTX1 for lysosomal degradation and controls NOTCH1 degradation, in the absence of ligand, through 'Lys-29'-linked polyubiquitination. Ubiquitinates SNX9. Ubiquitinates MAP3K7 through 'Lys-48'-linked conjugation. Together with UBR5, involved in the regulation of apoptosis and reactive oxygen species levels through the ubiquitination and proteasomal degradation of TXNIP: catalyzes 'Lys-48'-/'Lys-63'-branched ubiquitination of TXNIP. ITCH synthesizes 'Lys-63'-linked chains, while UBR5 is branching multiple 'Lys-48'-linked chains of substrate initially modified. Mediates the antiapoptotic activity of epidermal growth factor through the ubiquitination and proteasomal degradation of p15 BID. Ubiquitinates BRAT1 and this ubiquitination is enhanced in the presence of NDFIP1. Ubiquitinates NEDD9/HEF1, resulting in proteasomal degradation of NEDD9/HEF1. The chain is E3 ubiquitin-protein ligase Itchy (Itch) from Mus musculus (Mouse).